A 472-amino-acid polypeptide reads, in one-letter code: Adenosylhomocysteinase (472 aa).

The substrate site is built by Thr-64, Asp-138, and Glu-198. 199-201 contributes to the NAD(+) binding site; the sequence is TTT. Residues Lys-228 and Asp-232 each coordinate substrate. NAD(+) is bound by residues Asn-233, 262 to 267, Glu-285, Asn-320, 341 to 343, and Asn-386; these read GFGDVG and IGH.

The protein belongs to the adenosylhomocysteinase family. NAD(+) is required as a cofactor.

It localises to the cytoplasm. It catalyses the reaction S-adenosyl-L-homocysteine + H2O = L-homocysteine + adenosine. The protein operates within amino-acid biosynthesis; L-homocysteine biosynthesis; L-homocysteine from S-adenosyl-L-homocysteine: step 1/1. Its function is as follows. May play a key role in the regulation of the intracellular concentration of adenosylhomocysteine. This Prochlorococcus marinus (strain MIT 9312) protein is Adenosylhomocysteinase.